A 204-amino-acid polypeptide reads, in one-letter code: Pyridoxal 5'-phosphate synthase subunit PdxT (204 aa).

52–54 contributes to the L-glutamine binding site; it reads GES. Catalysis depends on Cys-84, which acts as the Nucleophile. L-glutamine is bound by residues Arg-116 and 143 to 144; that span reads IR. Active-site charge relay system residues include His-184 and Glu-186.

Belongs to the glutaminase PdxT/SNO family. In the presence of PdxS, forms a dodecamer of heterodimers. Only shows activity in the heterodimer.

It carries out the reaction aldehydo-D-ribose 5-phosphate + D-glyceraldehyde 3-phosphate + L-glutamine = pyridoxal 5'-phosphate + L-glutamate + phosphate + 3 H2O + H(+). The enzyme catalyses L-glutamine + H2O = L-glutamate + NH4(+). It participates in cofactor biosynthesis; pyridoxal 5'-phosphate biosynthesis. In terms of biological role, catalyzes the hydrolysis of glutamine to glutamate and ammonia as part of the biosynthesis of pyridoxal 5'-phosphate. The resulting ammonia molecule is channeled to the active site of PdxS. The sequence is that of Pyridoxal 5'-phosphate synthase subunit PdxT from Pyrobaculum aerophilum (strain ATCC 51768 / DSM 7523 / JCM 9630 / CIP 104966 / NBRC 100827 / IM2).